Reading from the N-terminus, the 528-residue chain is G protein-coupled receptor 161 (528 aa).

Residues 1-30 are Extracellular-facing; the sequence is MSLNSSLGHRKELSNLTEGASDQGGSGVTE. N4 and N15 each carry an N-linked (GlcNAc...) asparagine glycan. The helical transmembrane segment at 31–51 threads the bilayer; it reads FVAIVIITVFVCLGNLVIVIT. Over 52-64 the chain is Cytoplasmic; sequence LYRKSYLLTLSNK. A helical transmembrane segment spans residues 65-85; it reads FVFSLTLSNFLLSVLVLPFVV. The Extracellular portion of the chain corresponds to 86–101; that stretch reads TSSIRREWIFGVVWCN. A disulfide bond links C100 and C178. N101 carries N-linked (GlcNAc...) asparagine glycosylation. A helical membrane pass occupies residues 102–122; sequence FSALLYLLISSASMLTLGIIA. Residues 123-143 are Cytoplasmic-facing; sequence VDRYYAVLYPMAYPMKITGNR. The chain crosses the membrane as a helical span at residues 144–164; the sequence is AVMVLAYIWLHSLIGCLPPLF. The Extracellular segment spans residues 165–190; it reads GWSSVEFDEFKWMCVAAWHREPGYTA. A helical transmembrane segment spans residues 191–211; that stretch reads FWQIWCALLPFLVMLVCYGFI. Over 212–269 the chain is Cytoplasmic; sequence FRVARVKARKVHCGAVVTVEVGVQRTGRKNSSTSTSSSGSRKSAFQGVVYSANQCKAL. The helical transmembrane segment at 270–290 threads the bilayer; that stretch reads VTILVVIGAFMVTWGPYMVVI. Topologically, residues 291 to 306 are extracellular; that stretch reads TSEALWGKNCVSPTLE. A helical transmembrane segment spans residues 307–327; it reads TWATWLSFTSAICHPLIYGLW. Topologically, residues 328 to 528 are cytoplasmic; the sequence is NKTVRKELLG…EGDVLATEQR (201 aa).

Belongs to the G-protein coupled receptor 1 family.

Its subcellular location is the cell projection. The protein localises to the cilium membrane. The protein resides in the cell membrane. Its function is as follows. Key negative regulator of Shh signaling, which promotes the processing of GLI3 into GLI3R during neural tube development. Recruited by TULP3 and the IFT-A complex to primary cilia and acts as a regulator of the PKA-dependent basal repression machinery in Shh signaling by increasing cAMP levels, leading to promote the PKA-dependent processing of GLI3 into GLI3R and repress the Shh signaling. In presence of SHH, it is removed from primary cilia and is internalized into recycling endosomes, preventing its activity and allowing activation of the Shh signaling. Its ligand is unknown. This chain is G protein-coupled receptor 161 (GPR161), found in Bos taurus (Bovine).